The chain runs to 387 residues: Cysteine desulfurase IscS (387 aa).

Residues 73-74 (AT), Asn155, Gln183, and 203-205 (SAH) each bind pyridoxal 5'-phosphate. An N6-(pyridoxal phosphate)lysine modification is found at Lys206. Pyridoxal 5'-phosphate is bound at residue Thr241. Residue Cys328 is the Cysteine persulfide intermediate of the active site. Cys328 serves as a coordination point for [2Fe-2S] cluster.

Belongs to the class-V pyridoxal-phosphate-dependent aminotransferase family. NifS/IscS subfamily. As to quaternary structure, homodimer. Forms a heterotetramer with IscU, interacts with other sulfur acceptors. Requires pyridoxal 5'-phosphate as cofactor.

Its subcellular location is the cytoplasm. The enzyme catalyses (sulfur carrier)-H + L-cysteine = (sulfur carrier)-SH + L-alanine. It functions in the pathway cofactor biosynthesis; iron-sulfur cluster biosynthesis. Master enzyme that delivers sulfur to a number of partners involved in Fe-S cluster assembly, tRNA modification or cofactor biosynthesis. Catalyzes the removal of elemental sulfur atoms from cysteine to produce alanine. Functions as a sulfur delivery protein for Fe-S cluster synthesis onto IscU, an Fe-S scaffold assembly protein, as well as other S acceptor proteins. The polypeptide is Cysteine desulfurase IscS (Helicobacter pylori (strain ATCC 700392 / 26695) (Campylobacter pylori)).